The primary structure comprises 264 residues: Anamorsin homolog 2 (264 aa).

The interval 1 to 142 (MAATAAALAV…KVSWSMGSSF (142 aa)) is N-terminal SAM-like domain. A linker region spans residues 143-174 (PLKKATKGLPKIQIDDDSELIDEDSLLTEDDL). Positions 185, 194, 197, and 199 each coordinate [2Fe-2S] cluster. The interval 185-199 (CEVGATRKACKNCTC) is fe-S binding site A. [4Fe-4S] cluster-binding residues include Cys-225, Cys-228, Cys-236, and Cys-239. Short sequence motifs (cx2C motif) lie at residues 225-228 (CGNC) and 236-239 (CGTC). The segment at 225–239 (CGNCGLGDAFRCGTC) is fe-S binding site B.

It belongs to the anamorsin family. Monomer. [2Fe-2S] cluster is required as a cofactor. It depends on [4Fe-4S] cluster as a cofactor.

The protein resides in the cytoplasm. It localises to the mitochondrion intermembrane space. In terms of biological role, component of the cytosolic iron-sulfur (Fe-S) protein assembly (CIA) machinery. Required for the maturation of extramitochondrial Fe-S proteins. Part of an electron transfer chain functioning in an early step of cytosolic Fe-S biogenesis, facilitating the de novo assembly of a [4Fe-4S] cluster on the cytosolic Fe-S scaffold complex. Electrons are transferred from NADPH via a FAD- and FMN-containing diflavin oxidoreductase. Together with the diflavin oxidoreductase, also required for the assembly of the diferric tyrosyl radical cofactor of ribonucleotide reductase (RNR), probably by providing electrons for reduction during radical cofactor maturation in the catalytic small subunit. The polypeptide is Anamorsin homolog 2 (Oryza sativa subsp. japonica (Rice)).